The primary structure comprises 76 residues: MAKLIYSYLFISMFVLSVLLALPNAEGADIKRCVVDVKLSKPCTFQECIPLCFQRYNGNGVCTGKKNEICTCAYNC.

A signal peptide spans Met1–Gly27. 4 disulfide bridges follow: Cys33-Cys76, Cys43-Cys62, Cys48-Cys70, and Cys52-Cys72.

The protein belongs to the DEFL family.

It localises to the secreted. This is Defensin-like protein 163 (LCR24) from Arabidopsis thaliana (Mouse-ear cress).